A 482-amino-acid polypeptide reads, in one-letter code: Keratin, type I cytoskeletal 39 (482 aa).

A disordered region spans residues 1–24 (MDTKGSTVTISSSTPPQNCSGNTN). The segment at 1 to 91 (MDTKGSTVTI…RCTEGINTHE (91 aa)) is head. Residues 91-402 (EKETMQILNE…SLLESLDGRL (312 aa)) enclose the IF rod domain. The coil 1A stretch occupies residues 92-126 (KETMQILNERLANYLEKVRMLEGENADLEDKIQEA). The linker 1 stretch occupies residues 127–137 (CSKALPILCPD). Positions 138 to 238 (YLSYYTTIEE…HEEEVNSLQC (101 aa)) are coil 1B. The tract at residues 239 to 254 (QLGDRINIEVTAAPSV) is linker 12. Positions 255 to 398 (DLNQILQEMR…ATYRSLLESL (144 aa)) are coil 2. A tail region spans residues 399–482 (DGRLPCNPCA…PCYITRATKV (84 aa)).

The protein belongs to the intermediate filament family. Heterotetramer of two type I and two type II keratins.

Its function is as follows. May play a role in late hair differentiation. The protein is Keratin, type I cytoskeletal 39 (Krt39) of Mus musculus (Mouse).